The sequence spans 74 residues: ATP synthase subunit c (74 aa).

The next 2 helical transmembrane spans lie at 8-28 (FIGI…VSNI) and 52-72 (IGAG…MLLI).

It belongs to the ATPase C chain family. In terms of assembly, F-type ATPases have 2 components, F(1) - the catalytic core - and F(0) - the membrane proton channel. F(1) has five subunits: alpha(3), beta(3), gamma(1), delta(1), epsilon(1). F(0) has three main subunits: a(1), b(2) and c(10-14). The alpha and beta chains form an alternating ring which encloses part of the gamma chain. F(1) is attached to F(0) by a central stalk formed by the gamma and epsilon chains, while a peripheral stalk is formed by the delta and b chains.

It is found in the cell inner membrane. F(1)F(0) ATP synthase produces ATP from ADP in the presence of a proton or sodium gradient. F-type ATPases consist of two structural domains, F(1) containing the extramembraneous catalytic core and F(0) containing the membrane proton channel, linked together by a central stalk and a peripheral stalk. During catalysis, ATP synthesis in the catalytic domain of F(1) is coupled via a rotary mechanism of the central stalk subunits to proton translocation. Functionally, key component of the F(0) channel; it plays a direct role in translocation across the membrane. A homomeric c-ring of between 10-14 subunits forms the central stalk rotor element with the F(1) delta and epsilon subunits. This is ATP synthase subunit c from Rickettsia typhi (strain ATCC VR-144 / Wilmington).